Consider the following 292-residue polypeptide: Homoserine kinase (292 aa).

84-94 (PFSRGLGSSSA) is an ATP binding site.

Belongs to the GHMP kinase family. Homoserine kinase subfamily.

It is found in the cytoplasm. It carries out the reaction L-homoserine + ATP = O-phospho-L-homoserine + ADP + H(+). It participates in amino-acid biosynthesis; L-threonine biosynthesis; L-threonine from L-aspartate: step 4/5. Catalyzes the ATP-dependent phosphorylation of L-homoserine to L-homoserine phosphate. This chain is Homoserine kinase, found in Campylobacter hominis (strain ATCC BAA-381 / DSM 21671 / CCUG 45161 / LMG 19568 / NCTC 13146 / CH001A).